The following is a 3583-amino-acid chain: Surfactin synthase subunit 2 (3583 aa).

3 consecutive Carrier domains span residues 965–1039, 2005–2080, and 3034–3108; these read APKT…EENE, APET…EASA, and APTT…ERAE. S999, S2040, and S3069 each carry O-(pantetheine 4'-phosphoryl)serine.

This sequence belongs to the ATP-dependent AMP-binding enzyme family. Requires pantetheine 4'-phosphate as cofactor.

It participates in antibiotic biosynthesis; surfactin biosynthesis. This protein is a multifunctional enzyme able to activate and polymerize the amino acids Leu, Glu, Asp and Val. Activation sites for these AA consist of individual domains. In Bacillus subtilis (strain 168), this protein is Surfactin synthase subunit 2 (srfAB).